A 183-amino-acid polypeptide reads, in one-letter code: MVLFILVLYTCIQDGNGLLCGYISFSNTPMTSAKCWIGTVCFSIPCSFLVHFHCSSLHLFSNCFLHRSFSPHLMPRTSISTLGQLFEPTITHNGIPMACDNFILAPIPSFSLNWSRMSFCKFCMVGSFSSSDLTSCNLCEFSGLFGPVQIDTLYGAIIAGHLNPLESRPSSAIAPTSLLTPMP.

A signal peptide spans 1 to 17 (MVLFILVLYTCIQDGNG).

This is an uncharacterized protein from Saccharomyces cerevisiae (strain ATCC 204508 / S288c) (Baker's yeast).